Consider the following 834-residue polypeptide: Serine/threonine-protein kinase TNNI3K (834 aa).

The N-myristoyl glycine moiety is linked to residue Gly-2. Residues 21–49 (SESYAIIIERLEDDLQIKENEFQELRHIF) adopt a coiled-coil conformation. ANK repeat units follow at residues 66-96 (RGLSLLHLCCACGGNKSHIRALMLKGLRPSR), 100-129 (NGFPALHLAVYKDSLELITSLLHSGADVQQ), 133-162 (GGLTALHIAAIAGHPEAVEVLLQHGANVNV), 166-195 (VFFTPLHIAAYYGHEQVTSVLLKFGADVNV), 199-229 (VGDRPLHLASAKGFFNIVKLLVEGNKADVNA), 233-262 (EDHVPLHFCSRFGHHNIVSYLLQSDLEVQP), 268-297 (YGDTPLHLACYNGNFEVAKEIVHVTGTESL), 303-334 (FSETAFHSACTYGKNIDLVKFLLDQNAVNINH), 338-367 (DGHTGLHSACYHGHIRLVQFLLDNGADMNL), and 380-409 (DEQTCLMWAYEKGHDAIVTLLKHYKRPQDE). The Protein kinase domain occupies 462 to 722 (IEFHEIIGSG…EVVRKLEECL (261 aa)). ATP-binding positions include 468-476 (IGSGSFGKV) and Lys-489. Residue Asp-587 is the Proton acceptor of the active site. The interval 815 to 834 (PMSPMHLHSRRNSGSFEDGN) is disordered.

The protein belongs to the protein kinase superfamily. TKL Ser/Thr protein kinase family. MAP kinase kinase kinase subfamily. As to quaternary structure, interacts with TNNI3, ACTC, ACTA1, MYBPC3, AIP, FABP3 and HADHB. Mg(2+) serves as cofactor. Post-translationally, autophosphorylated.

It is found in the nucleus. It localises to the cytoplasm. The enzyme catalyses L-seryl-[protein] + ATP = O-phospho-L-seryl-[protein] + ADP + H(+). It carries out the reaction L-threonyl-[protein] + ATP = O-phospho-L-threonyl-[protein] + ADP + H(+). Its function is as follows. May play a role in cardiac physiology. The protein is Serine/threonine-protein kinase TNNI3K of Mus musculus (Mouse).